The chain runs to 349 residues: Inositol 2-dehydrogenase (349 aa).

It belongs to the Gfo/Idh/MocA family. In terms of assembly, homotetramer.

The enzyme catalyses myo-inositol + NAD(+) = scyllo-inosose + NADH + H(+). In terms of biological role, involved in the oxidation of myo-inositol (MI) to 2-keto-myo-inositol (2KMI or 2-inosose). The polypeptide is Inositol 2-dehydrogenase (Mycolicibacterium gilvum (strain PYR-GCK) (Mycobacterium gilvum (strain PYR-GCK))).